The primary structure comprises 625 residues: Chaperone protein HtpG (625 aa).

The tract at residues 1 to 341 (MGKRKFKAES…SEDLSLNISR (341 aa)) is a; substrate-binding. Positions 342-551 (EMLQHDRQLK…DGEISLEMEK (210 aa)) are b. The interval 552–625 (IINAMPDDQQ…FTNDICKVMV (74 aa)) is c.

It belongs to the heat shock protein 90 family. Homodimer.

The protein resides in the cytoplasm. Its function is as follows. Molecular chaperone. Has ATPase activity. The sequence is that of Chaperone protein HtpG from Oceanobacillus iheyensis (strain DSM 14371 / CIP 107618 / JCM 11309 / KCTC 3954 / HTE831).